Consider the following 150-residue polypeptide: MNRNTMDIYKILKQLPHRYPFLLVDRVLAIDKGKSIRAVKNVTINEPFFQGHFPYRPVMPGVLMLEALAQAAALLAFDAIDTTPDEDSVYYFAGMDGVRFKRPVEPGDQLILEVELVRMKAGIFKFKARALVDNELAVEAELTCAVRKIA.

H52 is an active-site residue.

Belongs to the thioester dehydratase family. FabZ subfamily.

The protein resides in the cytoplasm. It carries out the reaction a (3R)-hydroxyacyl-[ACP] = a (2E)-enoyl-[ACP] + H2O. Involved in unsaturated fatty acids biosynthesis. Catalyzes the dehydration of short chain beta-hydroxyacyl-ACPs and long chain saturated and unsaturated beta-hydroxyacyl-ACPs. In Albidiferax ferrireducens (strain ATCC BAA-621 / DSM 15236 / T118) (Rhodoferax ferrireducens), this protein is 3-hydroxyacyl-[acyl-carrier-protein] dehydratase FabZ.